Consider the following 2359-residue polypeptide: MPVLGVASKLRQPAVGPKPVHAALPIPNLGISVSRRCSSRPLEFATPERSMLSCQLTLKSTCEFGEKKALQGTAKEIEDSKIYTDWANHYLAKSGHKRLIKDLQQDIADGVLLADIIQIIANEKVEDINGCPRSQSQMIENVDVCLSFLAARGVNVQGLSAEEIRNGNLKAILGLFFSLSRYKQQQHHQQQYYQSLVELQQRVTHTAPQSEASQAKTQQDMQSSLTARYAAQSKHSGIATSQKKPTRLPGPSRVPAASSSNKAQGASNLNRRSQSFNSIDKNKPPNYANGNEKDSPKGPQPSSGINGNTQPPSTSGQPPASAIPSPSASKPWRSKSMNVKHSATSTMLTVKQPSPATSPTPSSDRLKPPVTEGVKSAPSGQKSMLEKFKLVNARTALRPPQAPSSGPNDGGREDDAFSESGEMEGFNSGLNSGGSTNSSPKVSPKLTPPKAGSKNFSNKKSLLQPKEKEEKTRDKNKACAEKSGKEEKDQVTTEAAPKKTSKIASLIPKGSKTAAAKKESLIPSSSGIPKPGSKVPTPKQTISPGSAASKESEKFRTSKGSSSQAFPKAITAEKASTPSLSTPLDGREAGQASPSSSCVMQVTHSSGQSPGNGAVQLPQQQQHSHPNTATVAPFIYRAHSENEGTSLPPADSCTSPTKMDSSYSKTAKQCLEEISGEDPEARRMRTVKNIADLRQNLEETMSSLRGTQISHSTLETTFDTTVTTEVNGRAIPNLTSRPSPMTWRLGQACPRLQAGDAPSMGAGYSRSGTSRFIHTDPSRFMYTTPLRRAAVSRLGNMSQIDMSEKASSDLDVSSEVDVGGYMSDGDILGKSLRADDINSGYMTDGGLNLYTRSLNRVPDTATSRDVIQRGVHDVTVDADSWDDSSSVSSGLSDTLDNISTDDLNTTSSISSYSNITVPSRKNTQLKTDAEKRSTTDETWDSPEELKKAEGDCDSHGDGAAKWKGATSGLAEDSEKTGQKASLSVSQTGSWRRGMSAQGGTPATARQKTSTSALKTPGKTDDAKASEKGKTPLKGSSLQRSPSDAGKSSGDEGKKPPSGIGRSTASSSFGYKKPSGVGASTMITSSGATITSGSATLGKIPKSAAIGGKSNAGRKTSLDGSQNQDDVVLHVSSKTTLQYRSLPRPSKSSTSGIPGRGGHRSSTSSIDSNVSSKSAGATTSKLREPTKIGSGRSSPVTVNQTDKEKEKVAVSDSESVSLSGSPKSSPTSASACGTQGLRQPGSKYPDIASPTFRRLFGAKAGGKSASAPNTEGAKSSSVVLSPSTSLARQGSLESPSSGTGSMGSAGGLSGSSSPLFNKPSDLTTDVISLSHSLASSPASVHSFTSGGLVWAANLSSSSAGSKDTPSYQSMTSLHTSSESIDLPLSHHGSLSGLTTGTHEVQSLLMRTGSVRSTLSESMQLDRNTLPKKGLRYTPSSRQANQEEGKEWLRSHSTGGLQDTGNQSPLVSPSAMSSSATGKYHFSNLVSPTNLSQFNLPAPSMMRSSSIPAQDSSFDLYDDAQLCGSATSLEERPRAVSHSGSFRDSMEEVHGSSLSLVSSTSSLYSTAEEKAHSEQIHKLRRELVASQEKVATLTSQLSANAHLVAAFEKSLGNMTGRLQSLTMTAEQKESELIELRETIEMLKAQNSAAQAAIQGALNGPDHPPKDLRIRRQHSSESVSSINSATSHSSIGSGNDADSKKKKKKNWLRSSFKQAFGKKKSTKPPSSHSDIEELTDSSLPASPKLPHNAGESGSSSMKPSQSASAICECTEAEAEIILQLKSELREKELKLTDIRLEALSSAHHLDQIREAMNRMQNEIEILKAENDRLKAETGNTAKPARPPSDSSSTASSSSSRQSLGLSLNNLNITESVTSDILLDDTGDATGHKDGRSVKIIVSISKGYGRAKDQKSQAYLIGSIGVSGKTKWDVLDGVIRRLFKEYVFRIDTSSSLGLSSDCIASYCIGDLIRSHNLEVPELLPCGYLVGDNNIITVNLKGVEENSLDSFVFDTLIPKPITQRYFNLLMEHHRIILSGPSGTGKTYLANKLAEYVITKSGRKKTEDAIATFNVDHKSSKELQQYLANLAEQCSADNNGVELPVVIILDNLHHVGSLSDIFNGFLNCKYNKCPYIIGTMNQGVSSSPNLELHHNFRWVLCANHTEPVKGFLGRYLRRKLIEMEIERNIRNNDLVKIIDWIPKTWHHLNSFLETHSSSDVTIGPRLFLPCPMDVEGSRVWFMDLWNYSLVPYVLEAVREGLQMYGKRAPWEDPSKWVLDTYPWSSASLPQEGPALLQLRPEDVGYEACTSTKEATTSKHIPQTDTEGDPLMNMLMKLQEAANYPSTQSCDGDSVSHREDILDTSIESTL.

Residues 77–184 form the Calponin-homology (CH) domain; the sequence is IEDSKIYTDW…LFFSLSRYKQ (108 aa). Polar residues-rich tracts occupy residues 204–226, 233–243, 257–279, and 300–317; these read THTA…SSLT, SKHSGIATSQK, ASSS…FNSI, and QPSS…TSGQ. 2 disordered regions span residues 204–623 and 641–660; these read THTA…QQQH and ENEG…TKMD. The segment covering 318-329 has biased composition (low complexity); that stretch reads PPASAIPSPSAS. Residues 335–352 are compositionally biased toward polar residues; the sequence is KSMNVKHSATSTMLTVKQ. Low complexity-rich tracts occupy residues 353-363 and 427-439; these read PSPATSPTPSS and NSGL…TNSS. Positions 465-491 are enriched in basic and acidic residues; it reads PKEKEEKTRDKNKACAEKSGKEEKDQV. Residues 522–536 are compositionally biased toward low complexity; it reads IPSSSGIPKPGSKVP. The span at 592–623 shows a compositional bias: polar residues; that stretch reads ASPSSSCVMQVTHSSGQSPGNGAVQLPQQQQH. The stretch at 680–708 forms a coiled coil; the sequence is EARRMRTVKNIADLRQNLEETMSSLRGTQ. 4 disordered regions span residues 878-1315, 1413-1472, 1653-1758, and 1829-1855; these read ADSW…SPLF, LSES…AMSS, GALN…KPSQ, and ETGN…SRQS. 2 stretches are compositionally biased toward low complexity: residues 883 to 896 and 904 to 916; these read DSSS…DTLD and NTTS…SNIT. Positions 917 to 926 are enriched in polar residues; that stretch reads VPSRKNTQLK. The segment covering 943-960 has biased composition (basic and acidic residues); the sequence is EELKKAEGDCDSHGDGAA. 2 stretches are compositionally biased toward polar residues: residues 978-989 and 997-1013; these read QKASLSVSQTGS and QGGT…TSAL. Residues 1017 to 1029 are compositionally biased toward basic and acidic residues; the sequence is GKTDDAKASEKGK. Composition is skewed to low complexity over residues 1077 to 1095 and 1160 to 1173; these read GAST…GSAT and SSTS…SSKS. Residues 1190–1199 show a composition bias toward polar residues; it reads GRSSPVTVNQ. Low complexity-rich tracts occupy residues 1209 to 1229, 1256 to 1266, and 1274 to 1285; these read VSDS…TSAS, GAKAGGKSASA, and SSSVVLSPSTSL. Residues 1299–1308 show a composition bias toward gly residues; that stretch reads GSMGSAGGLS. Residues 1439 to 1448 are compositionally biased toward basic and acidic residues; it reads NQEEGKEWLR. Over residues 1449-1461 the composition is skewed to polar residues; the sequence is SHSTGGLQDTGNQ. Residues Ser1462 and Ser1466 each carry the phosphoserine modification. Residues 1462–1472 are compositionally biased toward low complexity; sequence SPLVSPSAMSS. Residues 1565–1656 adopt a coiled-coil conformation; the sequence is AEEKAHSEQI…AQAAIQGALN (92 aa). 2 stretches are compositionally biased toward low complexity: residues 1675–1692 and 1749–1758; these read SVSS…GSGN and SGSSSMKPSQ. Positions 1768-1835 form a coiled coil; sequence EAEAEIILQL…LKAETGNTAK (68 aa). Residues 1841–1855 show a composition bias toward low complexity; that stretch reads SDSSSTASSSSSRQS.

This sequence belongs to the Nav/unc-53 family. Present in neurons from central and peripheral nervous systems (at protein level). Highly expressed in brain cortex, midbrain, cerebellum and hippocampus.

The protein localises to the nucleus outer membrane. Its function is as follows. Plays a role in cell migration. May be involved in neuron regeneration. May regulate IL2 production by T-cells. This is Neuron navigator 3 (Nav3) from Mus musculus (Mouse).